The chain runs to 515 residues: MAEQVALSQTQTCGILWEELCQSYSFHQSDTHIFIIMGASGDLAKRNIYPTIWWLFQDGLLPKDTFIVGYTDSHFTVANIRKQSEPFFKSTPEEEPKLEEFFAHSSYMASQYDDVASYEHLNSGMNALHQGPQANCLFYLALLPSGYRTVTKNICDTCTSQTGWNRIIVEKPFGRDLQSSNQLSNHIASLFHEDQIYRIDHYLGKEVVQNLMVLRFVNRILGPIWNRDNIACMSFTFKEPFGTEGRWSYLSESGIIWEVMQNPLLQILCLVAMEKPISTNSDNIRDDKVRVLKCISKVQVSNVVLSQYMENPTEEGEATRGYPEDPRVPHGSTTDTFAAAVLYVENERWDGVPFILRCGKALNERKAEVRLQFRDVAGDIFRQQCKRNELVIRVQPNEAVYTKMMTKKPGMFFNPEESELDLTYGNRYKNVKFPDAYERLILDVFCGSQMHFVRSDELREAWRIFTPLLHHIEREKARPIPYVYGSRGPVEADELMKRVGFQYEGTYKWVNPHKL.

Ala2 carries the post-translational modification N-acetylalanine. Ser8 carries the post-translational modification Phosphoserine. A Phosphothreonine modification is found at Thr10. 38–45 (GASGDLAK) contacts NADP(+). Residue Lys89 is modified to N6-acetyllysine. Residues Tyr147 and Lys171 each coordinate NADP(+). D-glucose 6-phosphate is bound by residues Lys171, 201–205 (HYLGK), Glu239, and Glu258. N6-(2-hydroxyisobutyryl)lysine; alternate is present on Lys171. Residue Lys171 is modified to N6-acetyllysine; alternate. Arg357 is an NADP(+) binding site. Positions 360 and 365 each coordinate D-glucose 6-phosphate. Residues Lys366, Arg370, and Arg393 each contribute to the NADP(+) site. Gln395 lines the D-glucose 6-phosphate pocket. NADP(+) contacts are provided by residues 401-403 (YTK) and 421-423 (DLT). At Lys403 the chain carries N6-acetyllysine. N6-acetyllysine is present on Lys432. Residue Arg487 participates in NADP(+) binding. Lys497 is modified (N6-acetyllysine). Positions 503 and 509 each coordinate NADP(+). Tyr503 carries the phosphotyrosine modification.

The protein belongs to the glucose-6-phosphate dehydrogenase family. In terms of assembly, homotetramer; dimer of dimers. Interacts with SIRT2; the interaction is enhanced by H(2)O(2) treatment. Forms a ternary complex with ALDOB and TP53; this interaction is direct. ALDOB stabilizes the complex inhibiting G6PD activity and keeping oxidative pentose phosphate metabolism in check. Post-translationally, acetylated by ELP3 at Lys-403; acetylation inhibits its homodimerization and enzyme activity. Deacetylated by SIRT2 at Lys-403; deacetylation stimulates its enzyme activity.

Its subcellular location is the cytoplasm. It is found in the cytosol. It localises to the membrane. The catalysed reaction is D-glucose 6-phosphate + NADP(+) = 6-phospho-D-glucono-1,5-lactone + NADPH + H(+). It functions in the pathway carbohydrate degradation; pentose phosphate pathway; D-ribulose 5-phosphate from D-glucose 6-phosphate (oxidative stage): step 1/3. In terms of biological role, cytosolic glucose-6-phosphate dehydrogenase that catalyzes the first and rate-limiting step of the oxidative branch within the pentose phosphate pathway/shunt, an alternative route to glycolysis for the dissimilation of carbohydrates and a major source of reducing power and metabolic intermediates for fatty acid and nucleic acid biosynthetic processes. This Bos indicus (Zebu) protein is Glucose-6-phosphate 1-dehydrogenase (G6PD).